The sequence spans 127 residues: Large ribosomal subunit protein bL17 (127 aa).

Belongs to the bacterial ribosomal protein bL17 family. In terms of assembly, part of the 50S ribosomal subunit. Contacts protein L32.

This Salmonella paratyphi A (strain AKU_12601) protein is Large ribosomal subunit protein bL17.